A 473-amino-acid polypeptide reads, in one-letter code: H(+)/Cl(-) exchange transporter ClcA (473 aa).

Over 1–32 (MKTDTSTFLAQQIVRLRRRDQIRRLMQRDKTP) the chain is Cytoplasmic. Residues 33-69 (LAILFMAAVVGTLTGLVGVAFEKAVSWVQNMRIGALV) form a helical membrane-spanning segment. Residues 70–76 (QVADHAF) lie on the Periplasmic side of the membrane. A helical membrane pass occupies residues 77–100 (LLWPLAFILSALLAMVGYFLVRKF). Positions 106 to 110 (GSGIP) match the Selectivity filter part_1 motif. S107 contributes to the chloride binding site. Residues 109 to 116 (IPEIEGAL) constitute an intramembrane region (helical). The Cytoplasmic segment spans residues 117-123 (EELRPVR). Helical transmembrane passes span 124–141 (WWRV…TLGA) and 148–166 (EGPT…LDVF). The Selectivity filter part_2 motif lies at 146–150 (GREGP). At 167–176 (RMRSAEARHT) the chain is on the cytoplasmic side. Intramembrane regions (helical) lie at residues 177 to 189 (LLAT…LSAA) and 193 to 201 (PLAGILFII). Residues 202–214 (EEMRPQFRYNLIS) are Cytoplasmic-facing. A helical membrane pass occupies residues 215-232 (IKAVFTGVIMSSIVFRIF). The Periplasmic segment spans residues 233–252 (NGEAPIIEVGKLSDAPVNTL). The helical transmembrane segment at 253–281 (WLYLILGIIFGCVGPVFNSLVLRTQDMFQ) threads the bilayer. Over 282-287 (RFHGGE) the chain is Cytoplasmic. A helical transmembrane segment spans residues 288-309 (IKKWVLMGGAIGGLCGILGLIE). Residues 310–329 (PEAAGGGFNLIPIAAAGNFS) lie on the Periplasmic side of the membrane. Transmembrane regions (helical) follow at residues 330 to 349 (VGLL…LCFS) and 355 to 376 (GIFA…MAAA). Positions 355 to 359 (GIFAP) match the Selectivity filter part_3 motif. Chloride-binding residues include I356 and F357. Topologically, residues 377–386 (VLFPQYHLEA) are periplasmic. An intramembrane region (helical) is located at residues 387-401 (GTFAIAGMGALMAAS). The segment at residues 402–404 (VRA) is an intramembrane region (note=Loop between two helices). The helical intramembrane region spans 405–416 (PLTGIVLVLEMT). The note=Loop between two helices intramembrane region spans 417-421 (DNYQL). The helical transmembrane segment at 422 to 438 (ILPMIITCLGATLLAQF) threads the bilayer. Topologically, residues 439–473 (LGGKPLYSTILARTLAKQDAEQAAKSQNAPAGENT) are cytoplasmic. Position 445 (Y445) interacts with chloride.

Belongs to the chloride channel (TC 2.A.49) family. ClcA subfamily. Homodimer.

The protein localises to the cell inner membrane. It catalyses the reaction 2 chloride(in) + H(+)(out) = 2 chloride(out) + H(+)(in). Functionally, proton-coupled chloride transporter. Functions as antiport system and exchanges two chloride ions for 1 proton. Probably acts as an electrical shunt for an outwardly-directed proton pump that is linked to amino acid decarboxylation, as part of the extreme acid resistance (XAR) response. This chain is H(+)/Cl(-) exchange transporter ClcA, found in Salmonella gallinarum (strain 287/91 / NCTC 13346).